Consider the following 439-residue polypeptide: C4-dicarboxylate transport protein (439 aa).

9 consecutive transmembrane segments (helical) span residues 9–29, 45–65, 80–100, 150–170, 186–206, 221–241, 291–311, 334–354, and 357–377; these read HLYFQVLTAISFGVALGYYLP, MIKMIITPIIFCTVVTGIAGM, LYFEAVSTLALGIGLVVINII, GEILQVLFFAILFGLALSAMG, AFFGVVNIIMKFAPIGAFGAM, LGMLMGSFYLTCLLFVFVVLG, VVGLVIPTGYSFNLDGTSIYL, ILGVLMLTSKGAAGVTGSGFV, and AATFAAIPTIPVAGLALILGI.

Belongs to the dicarboxylate/amino acid:cation symporter (DAACS) (TC 2.A.23) family.

Its subcellular location is the cell inner membrane. Functionally, responsible for the transport of dicarboxylates such as succinate, fumarate, and malate from the periplasm across the membrane. This Geobacter sp. (strain M21) protein is C4-dicarboxylate transport protein.